Consider the following 73-residue polypeptide: Translation initiation factor IF-1 (73 aa).

Positions 1-73 (MAKKEDTLVL…TKARVVYRHR (73 aa)) constitute an S1-like domain.

Belongs to the IF-1 family. As to quaternary structure, component of the 30S ribosomal translation pre-initiation complex which assembles on the 30S ribosome in the order IF-2 and IF-3, IF-1 and N-formylmethionyl-tRNA(fMet); mRNA recruitment can occur at any time during PIC assembly.

The protein localises to the cytoplasm. Its function is as follows. One of the essential components for the initiation of protein synthesis. Stabilizes the binding of IF-2 and IF-3 on the 30S subunit to which N-formylmethionyl-tRNA(fMet) subsequently binds. Helps modulate mRNA selection, yielding the 30S pre-initiation complex (PIC). Upon addition of the 50S ribosomal subunit IF-1, IF-2 and IF-3 are released leaving the mature 70S translation initiation complex. The polypeptide is Translation initiation factor IF-1 (Chlamydia pneumoniae (Chlamydophila pneumoniae)).